We begin with the raw amino-acid sequence, 166 residues long: Monothiol glutaredoxin-3 (166 aa).

The 104-residue stretch at 56-159 (DSTDFEVFLE…STLDEWTHNK (104 aa)) folds into the Glutaredoxin domain. Cys76 provides a ligand contact to [2Fe-2S] cluster.

Belongs to the glutaredoxin family. Monothiol subfamily. In terms of assembly, homodimer.

It localises to the nucleus. Its function is as follows. Monothiol glutaredoxin involved in the biogenesis of iron-sulfur clusters. Binds one iron-sulfur cluster per dimer. The iron-sulfur cluster is bound between subunits, and is complexed by a bound glutathione and a cysteine residue from each subunit. The chain is Monothiol glutaredoxin-3 (grx3) from Schizosaccharomyces pombe (strain 972 / ATCC 24843) (Fission yeast).